Reading from the N-terminus, the 217-residue chain is MLITFEGIDGAGKSTQVVKLKRHLQERGREVLTLREPGGTPVAEQIRELLLESHNDITSIAELLLFSASRAELMEKIIVPALEDGCDVILDRFFDSTTAYQGYGRGLNLDMLAEINRIASHGIRPDITFYLDLTPEDALLRKFSEKSLPLAFESEELDRMENSGLEFYQRVRAGYHAILEAEPQRIIMIDALLTPQEIHRKILSALQALEVPEDGKR.

7 to 14 (GIDGAGKS) contributes to the ATP binding site.

It belongs to the thymidylate kinase family.

The catalysed reaction is dTMP + ATP = dTDP + ADP. Its function is as follows. Phosphorylation of dTMP to form dTDP in both de novo and salvage pathways of dTTP synthesis. The polypeptide is Thymidylate kinase (Chlorobaculum parvum (strain DSM 263 / NCIMB 8327) (Chlorobium vibrioforme subsp. thiosulfatophilum)).